Here is a 459-residue protein sequence, read N- to C-terminus: Ribulose bisphosphate carboxylase/oxygenase activase, chloroplastic (459 aa).

164 to 171 (GGKGQGKS) is a binding site for ATP.

This sequence belongs to the RuBisCO activase family.

The protein resides in the plastid. It is found in the chloroplast stroma. Its function is as follows. Activation of RuBisCO (ribulose-1,5-bisphosphate carboxylase/oxygenase; EC 4.1.1.39) involves the ATP-dependent carboxylation of the epsilon-amino group of lysine leading to a carbamate structure. This Solanum pennellii (Tomato) protein is Ribulose bisphosphate carboxylase/oxygenase activase, chloroplastic.